The following is a 546-amino-acid chain: Chaperonin GroEL (546 aa).

ATP contacts are provided by residues 30–33 (TLGP), lysine 51, 87–91 (DGTTT), glycine 415, and aspartate 495.

This sequence belongs to the chaperonin (HSP60) family. In terms of assembly, forms a cylinder of 14 subunits composed of two heptameric rings stacked back-to-back. Interacts with the co-chaperonin GroES.

It localises to the cytoplasm. It catalyses the reaction ATP + H2O + a folded polypeptide = ADP + phosphate + an unfolded polypeptide.. Its function is as follows. Together with its co-chaperonin GroES, plays an essential role in assisting protein folding. The GroEL-GroES system forms a nano-cage that allows encapsulation of the non-native substrate proteins and provides a physical environment optimized to promote and accelerate protein folding. This Brucella melitensis biotype 2 (strain ATCC 23457) protein is Chaperonin GroEL.